A 796-amino-acid polypeptide reads, in one-letter code: Probable phosphoketolase (796 aa).

Belongs to the XFP family. The cofactor is thiamine diphosphate.

This is Probable phosphoketolase from Streptomyces coelicolor (strain ATCC BAA-471 / A3(2) / M145).